Consider the following 2039-residue polypeptide: Calcium-channel protein CCH1 (2039 aa).

Disordered stretches follow at residues 1 to 171 and 206 to 288; these read MQGR…PPRS and PQLK…PQKE. Basic and acidic residues predominate over residues 64-80; that stretch reads STEEKKGDEYNGNDKDS. N-linked (GlcNAc...) asparagine glycosylation occurs at Asn-98. Low complexity-rich tracts occupy residues 122-132 and 147-164; these read SPSTKSAKSSS and FSSYSRSSSRRVSNSPSS. The span at 209-226 shows a compositional bias: basic and acidic residues; it reads KSEKSRPVSDVGEDRGEG. Residues Asn-257 and Asn-269 are each glycosylated (N-linked (GlcNAc...) asparagine). The segment covering 271-281 has biased composition (basic residues); sequence SRKKPSPKFFH. A Phosphoserine modification is found at Ser-284. Residues 346-366 form a helical membrane-spanning segment; that stretch reads YSLLYNTLLTFYAILLAIRTY. An N-linked (GlcNAc...) asparagine glycan is attached at Asn-379. The helical transmembrane segment at 384–404 threads the bilayer; the sequence is FIFILSACFTGNDIAKIIAFG. Asn-559 carries N-linked (GlcNAc...) asparagine glycosylation. A run of 3 helical transmembrane segments spans residues 563–583, 658–678, and 691–711; these read MLVYFWIFFGILGVQIFQGSF, IVNSMELVFVIMSANTFTDLM, and LFFIVCIFVLTIWLLNLLIAV. Residues Asn-754 and Asn-760 are each glycosylated (N-linked (GlcNAc...) asparagine). The next 3 membrane-spanning stretches (helical) occupy residues 766–786, 809–829, and 841–861; these read LAIYSHVEFIFVILIICDIGM, ISIVLFIESLARLVLYLPNMW, and FIISIITLVISCLAVEGVLGH. N-linked (GlcNAc...) asparagine glycans are attached at residues Asn-882 and Asn-900. Helical transmembrane passes span 904–924 and 942–962; these read FYFFFTFLVAIIMAVYFEGVI and SFLSLFIIGSTENWTDILYAL. The N-linked (GlcNAc...) asparagine glycan is linked to Asn-968. A helical membrane pass occupies residues 978–998; it reads FFIIWFLLSNSVILNIFIALI. Residue Asn-1153 is glycosylated (N-linked (GlcNAc...) asparagine). The helical transmembrane segment at 1207–1227 threads the bilayer; the sequence is VFVFIFALATILLIVCSCYVT. A glycan (N-linked (GlcNAc...) asparagine) is linked at Asn-1240. Helical transmembrane passes span 1247–1267 and 1277–1297; these read CAFIGAFSIEFIVKTVADGFI and PWNFIDFCVLISMWINLIAYL. The N-linked (GlcNAc...) asparagine glycan is linked to Asn-1302. A run of 2 helical transmembrane segments spans residues 1340–1360 and 1408–1428; these read IFEAGLISLSLLFPFTVWGLS and FASAFSSLYQIISLEGWVDLL. Asn-1433 carries N-linked (GlcNAc...) asparagine glycosylation. The next 5 helical transmembrane spans lie at 1452 to 1472, 1529 to 1549, 1554 to 1574, 1596 to 1616, and 1618 to 1638; these read FLVLFNFLSMVFILNLFVSFI, NFYYASFLQVVLYLHIIMLLS, PGNLIGYQGVYFMFSTSVFLI, IRLSIIIIAFIMNAVAFHVPA, and HYWFHNIKGFFLLVIFLFIIP. Asn-1640 carries an N-linked (GlcNAc...) asparagine glycan. Residues 1654-1674 form a helical membrane-spanning segment; that stretch reads LPPILSLTYTWGVLFLVYAIA. Residues Asn-1687 and Asn-1732 are each glycosylated (N-linked (GlcNAc...) asparagine). The helical transmembrane segment at 1748–1768 threads the bilayer; it reads LMSWNIISMYIFVNMFVSLII. Asn-1770 and Asn-1785 each carry an N-linked (GlcNAc...) asparagine glycan. An EF-hand domain is found at 1787-1822; it reads SEIKKYIEAWSKFDTDGTGELELSYLPRIMHSFDGP. The disordered stretch occupies residues 2011–2039; sequence PRMNQDSTMEPPEEPIDNNDDSANDLIDR. Residues 2021–2033 are compositionally biased toward acidic residues; that stretch reads PPEEPIDNNDDSA.

The protein belongs to the calcium channel alpha-1 subunit (TC 1.A.1.11) family. In terms of assembly, interacts with MID1 to form a Ca(2+) influx channel.

Its subcellular location is the cell membrane. Functionally, voltage-gated, high-affinity calcium channel that functions together with MID1 to mediate calcium entry into cells. Required during conditions of environmental stress. The polypeptide is Calcium-channel protein CCH1 (CCH1) (Saccharomyces cerevisiae (strain ATCC 204508 / S288c) (Baker's yeast)).